The following is a 262-amino-acid chain: Zinc import ATP-binding protein ZnuC (262 aa).

An ABC transporter domain is found at 6–221; the sequence is IRLDKVAVTL…PAFVELFGKN (216 aa). 38-45 provides a ligand contact to ATP; sequence GPNGAGKT.

It belongs to the ABC transporter superfamily. Zinc importer (TC 3.A.1.15.5) family. The complex is composed of two ATP-binding proteins (ZnuC), two transmembrane proteins (ZnuB) and a solute-binding protein (ZnuA).

The protein resides in the cell inner membrane. It carries out the reaction Zn(2+)(out) + ATP(in) + H2O(in) = Zn(2+)(in) + ADP(in) + phosphate(in) + H(+)(in). In terms of biological role, part of the ABC transporter complex ZnuABC involved in zinc import. Responsible for energy coupling to the transport system. In Pseudomonas syringae pv. syringae (strain B728a), this protein is Zinc import ATP-binding protein ZnuC.